A 262-amino-acid chain; its full sequence is Endoplasmic reticulum chaperone BiP (262 aa).

8-11 (GSTR) lines the ATP pocket. Positions 53 to 63 (QDTGDLVLLDV) are interdomain linker. The substrate-binding (SBD) stretch occupies residues 64-144 (CPLTLGIETV…PRGVPQIEVT (81 aa)). At lysine 91 the chain carries N6-succinyllysine. An Omega-N-methylarginine modification is found at arginine 136. An O-AMP-threonine; alternate modification is found at threonine 162. At threonine 162 the chain carries Phosphothreonine; alternate. Residue lysine 229 is modified to N6,N6,N6-trimethyllysine; by METTL21A; in vitro. Lysine 229 is subject to N6,N6-dimethyllysine; alternate. Lysine 229 is subject to N6-methyllysine; alternate. N6-methyllysine is present on lysine 235.

Belongs to the heat shock protein 70 family. In terms of assembly, monomer and homooligomer; homooligomerization via the interdomain linker inactivates the chaperone activity and acts as a storage of HSPA5/BiP molecules. Interacts with DNAJC1 (via J domain). Component of an EIF2 complex at least composed of CELF1/CUGBP1, CALR, CALR3, EIF2S1, EIF2S2, HSP90B1 and HSPA5. Part of a large chaperone multiprotein complex comprising DNAJB11, HSP90B1, HSPA5, HYOU, PDIA2, PDIA4, PDIA6, PPIB, SDF2L1, UGGT1 and very small amounts of ERP29, but not, or at very low levels, CALR nor CANX. Interacts with TMEM132A and TRIM21. May form a complex with ERLEC1, OS9, SEL1L and SYVN1. Interacts with DNAJC10. Interacts with DNAJB9/ERdj4; leading to recruit HSPA5/BiP to ERN1/IRE1. Interacts with ERN1/IRE1 (via luminal domain); the interaction takes place following interaction with DNAJB9/ERdj4 and leads to inactivate ERN1/IRE1, the interaction also competitively inhibits ERN1 interaction with MANF. Interacts directly with MANF (via SAP domain); the interaction inhibits ATP binding to HSPA5/BiP and subsequent nucleotide exchange. Interacts with EIF2AK3/PERK (via luminal domain); interaction leads to inactivate EIF2AK3/PERK. Interacts with MX1. Interacts with METTL23. Interacts with CEMIP; the interaction induces calcium leakage from the endoplasmic reticulum and cell migration. Interacts with PCSK4 form; the interaction takes place in the endoplasmic reticulum. Interacts with CIPC. Interacts with CCDC88B (via C-terminus); the interaction opposes ERN1-mediated JNK activation, protecting against apoptosis. Interacts with INPP5K; necessary for INPP5K localization at the endoplasmic reticulum. Interacts with MANF; the interaction is direct. Interacts with LOXL2; leading to activate the ERN1/IRE1-XBP1 pathway of the unfolded protein response. Interacts with CLU under stressed condition; interaction increases CLU protein stability; facilitates its retrotranslocation and redistribution to the mitochondria; cooperatively suppress stress-induced apoptosis by stabilizing mitochondrial membrane integrity. Interacts with CCDC47. Interacts with CLN3. Interacts with ELAPOR1; may regulate the function of HSPA5 in apoptosis and cell proliferation. Interacts with CASP7. Interacts with ILDR2; the interaction stabilizes ILDR2 expression. Interacts with ADAM7. In unstressed cells, AMPylation at Thr-162 by FICD inactivates the chaperome activity: AMPylated form is locked in a relatively inert state and only weakly stimulated by J domain-containing proteins. In response to endoplasmic reticulum stress, de-AMPylation by the same protein, FICD, restores the chaperone activity.

The protein localises to the endoplasmic reticulum lumen. It localises to the melanosome. Its subcellular location is the cytoplasm. It is found in the cell surface. It catalyses the reaction ATP + H2O = ADP + phosphate + H(+). The chaperone activity is regulated by ATP-induced allosteric coupling of the nucleotide-binding (NBD) and substrate-binding (SBD) domains. In the ADP-bound and nucleotide-free (apo) states, the two domains have little interaction. In contrast, in the ATP-bound state the two domains are tightly coupled, which results in drastically accelerated kinetics in both binding and release of polypeptide substrates. J domain-containing co-chaperones (DNAJB9/ERdj4 or DNAJC10/ERdj5) stimulate the ATPase activity and are required for efficient substrate recognition by HSPA5/BiP. Homooligomerization inactivates participating HSPA5/BiP protomers and probably act as reservoirs to store HSPA5/BiP molecules when they are not needed by the cell. In terms of biological role, endoplasmic reticulum chaperone that plays a key role in protein folding and quality control in the endoplasmic reticulum lumen. Involved in the correct folding of proteins and degradation of misfolded proteins via its interaction with DNAJC10/ERdj5, probably to facilitate the release of DNAJC10/ERdj5 from its substrate. Acts as a key repressor of the EIF2AK3/PERK and ERN1/IRE1-mediated unfolded protein response (UPR). In the unstressed endoplasmic reticulum, recruited by DNAJB9/ERdj4 to the luminal region of ERN1/IRE1, leading to disrupt the dimerization of ERN1/IRE1, thereby inactivating ERN1/IRE1. Also binds and inactivates EIF2AK3/PERK in unstressed cells. Accumulation of misfolded protein in the endoplasmic reticulum causes release of HSPA5/BiP from ERN1/IRE1 and EIF2AK3/PERK, allowing their homodimerization and subsequent activation. Plays an auxiliary role in post-translational transport of small presecretory proteins across endoplasmic reticulum (ER). May function as an allosteric modulator for SEC61 channel-forming translocon complex, likely cooperating with SEC62 to enable the productive insertion of these precursors into SEC61 channel. Appears to specifically regulate translocation of precursors having inhibitory residues in their mature region that weaken channel gating. May also play a role in apoptosis and cell proliferation. The protein is Endoplasmic reticulum chaperone BiP of Sus scrofa (Pig).